The sequence spans 160 residues: Transmembrane protein 220 (160 aa).

The next 5 membrane-spanning stretches (helical) occupy residues 3-23 (PALWRACNGLMAAFFALAALV), 30-50 (AEVWVVVYTIPAVLTLLVGLN), 62-82 (ISAIHILFCTVWAVGLASYLL), 100-120 (GLVIITAWIILCHSSSKNPVG), and 125-145 (LAIAIVITLFPFISWVYIYIN).

Its subcellular location is the membrane. This Homo sapiens (Human) protein is Transmembrane protein 220 (TMEM220).